The following is a 256-amino-acid chain: Thiazole synthase (256 aa).

Lysine 96 acts as the Schiff-base intermediate with DXP in catalysis. 1-deoxy-D-xylulose 5-phosphate contacts are provided by residues glycine 157, 183–184 (AG), and 205–206 (NT).

The protein belongs to the ThiG family. As to quaternary structure, homotetramer. Forms heterodimers with either ThiH or ThiS.

It localises to the cytoplasm. The enzyme catalyses [ThiS sulfur-carrier protein]-C-terminal-Gly-aminoethanethioate + 2-iminoacetate + 1-deoxy-D-xylulose 5-phosphate = [ThiS sulfur-carrier protein]-C-terminal Gly-Gly + 2-[(2R,5Z)-2-carboxy-4-methylthiazol-5(2H)-ylidene]ethyl phosphate + 2 H2O + H(+). It participates in cofactor biosynthesis; thiamine diphosphate biosynthesis. Functionally, catalyzes the rearrangement of 1-deoxy-D-xylulose 5-phosphate (DXP) to produce the thiazole phosphate moiety of thiamine. Sulfur is provided by the thiocarboxylate moiety of the carrier protein ThiS. In vitro, sulfur can be provided by H(2)S. The sequence is that of Thiazole synthase from Bacillus cereus (strain 03BB102).